We begin with the raw amino-acid sequence, 183 residues long: Beta-defensin 129 (183 aa).

An N-terminal signal peptide occupies residues 1 to 19 (MKLLFPIFASLMLQYQVNT). 3 disulfide bridges follow: C27-C53, C34-C48, and C38-C54. The disordered stretch occupies residues 142–183 (ATSAKSNTKESGDSATASPPPAPPPPNILPTPSLELEEAEEQ). Pro residues predominate over residues 159 to 170 (SPPPAPPPPNIL).

It belongs to the beta-defensin family.

Its subcellular location is the secreted. In terms of biological role, has antibacterial activity. This chain is Beta-defensin 129 (DEFB129), found in Macaca fascicularis (Crab-eating macaque).